We begin with the raw amino-acid sequence, 314 residues long: Ribosomal RNA small subunit methyltransferase H (314 aa).

S-adenosyl-L-methionine is bound by residues 35–37 (GGH), Asp-54, Phe-83, Asp-104, and Gln-111.

Belongs to the methyltransferase superfamily. RsmH family.

Its subcellular location is the cytoplasm. It catalyses the reaction cytidine(1402) in 16S rRNA + S-adenosyl-L-methionine = N(4)-methylcytidine(1402) in 16S rRNA + S-adenosyl-L-homocysteine + H(+). In terms of biological role, specifically methylates the N4 position of cytidine in position 1402 (C1402) of 16S rRNA. This chain is Ribosomal RNA small subunit methyltransferase H, found in Oenococcus oeni (strain ATCC BAA-331 / PSU-1).